Consider the following 389-residue polypeptide: Lipid-A-disaccharide synthase (389 aa).

It belongs to the LpxB family.

The catalysed reaction is a lipid X + a UDP-2-N,3-O-bis[(3R)-3-hydroxyacyl]-alpha-D-glucosamine = a lipid A disaccharide + UDP + H(+). It functions in the pathway bacterial outer membrane biogenesis; LPS lipid A biosynthesis. Functionally, condensation of UDP-2,3-diacylglucosamine and 2,3-diacylglucosamine-1-phosphate to form lipid A disaccharide, a precursor of lipid A, a phosphorylated glycolipid that anchors the lipopolysaccharide to the outer membrane of the cell. This chain is Lipid-A-disaccharide synthase, found in Paraburkholderia xenovorans (strain LB400).